The primary structure comprises 517 residues: ATP synthase subunit alpha (517 aa).

173–180 (GDRQTGKT) lines the ATP pocket.

The protein belongs to the ATPase alpha/beta chains family. F-type ATPases have 2 components, CF(1) - the catalytic core - and CF(0) - the membrane proton channel. CF(1) has five subunits: alpha(3), beta(3), gamma(1), delta(1), epsilon(1). CF(0) has three main subunits: a(1), b(2) and c(9-12). The alpha and beta chains form an alternating ring which encloses part of the gamma chain. CF(1) is attached to CF(0) by a central stalk formed by the gamma and epsilon chains, while a peripheral stalk is formed by the delta and b chains.

It localises to the cell inner membrane. It catalyses the reaction ATP + H2O + 4 H(+)(in) = ADP + phosphate + 5 H(+)(out). Its function is as follows. Produces ATP from ADP in the presence of a proton gradient across the membrane. The alpha chain is a regulatory subunit. The sequence is that of ATP synthase subunit alpha from Legionella pneumophila (strain Lens).